We begin with the raw amino-acid sequence, 526 residues long: Probable metalloreductase AIM14 (526 aa).

Helical transmembrane passes span 17-37 (IPYG…LGVL), 60-80 (LYLV…LLPF), 96-113 (RLGR…LLNL), 138-158 (CIII…ALGE), 172-192 (LAGV…IGPM), 199-219 (AFYV…AFHA), and 221-241 (PSVT…QGFA). In terms of domain architecture, Ferric oxidoreductase spans 97–214 (LGRLSYALLP…NLTGISFIFV (118 aa)). In terms of domain architecture, FAD-binding FR-type spans 238-370 (QGFAKFYYAK…GGSGISFGLP (133 aa)).

It belongs to the ferric reductase (FRE) family. AIM14 subfamily.

It localises to the membrane. Functionally, probable cell surface metalloreductase. May be involved in iron or copper homeostasis. The chain is Probable metalloreductase AIM14 (AIM14) from Zygosaccharomyces rouxii (strain ATCC 2623 / CBS 732 / NBRC 1130 / NCYC 568 / NRRL Y-229).